The sequence spans 237 residues: Ribonuclease PH (237 aa).

Phosphate is bound by residues Arg86 and 124–126 (GTR).

This sequence belongs to the RNase PH family. As to quaternary structure, homohexameric ring arranged as a trimer of dimers.

The catalysed reaction is tRNA(n+1) + phosphate = tRNA(n) + a ribonucleoside 5'-diphosphate. Functionally, phosphorolytic 3'-5' exoribonuclease that plays an important role in tRNA 3'-end maturation. Removes nucleotide residues following the 3'-CCA terminus of tRNAs; can also add nucleotides to the ends of RNA molecules by using nucleoside diphosphates as substrates, but this may not be physiologically important. Probably plays a role in initiation of 16S rRNA degradation (leading to ribosome degradation) during starvation. This Methylobacterium nodulans (strain LMG 21967 / CNCM I-2342 / ORS 2060) protein is Ribonuclease PH.